A 379-amino-acid polypeptide reads, in one-letter code: Chaperone protein DnaJ (379 aa).

The J domain maps to 5-70; the sequence is DFYEVLGVSR…QKRSAYDQYG (66 aa). The CR-type zinc finger occupies 134 to 212; that stretch reads GCDKEIEVPT…CHGEGRVHKT (79 aa). Zn(2+)-binding residues include Cys-147, Cys-150, Cys-164, Cys-167, Cys-186, Cys-189, Cys-200, and Cys-203. CXXCXGXG motif repeat units lie at residues 147-154, 164-171, 186-193, and 200-207; these read CDPCEGTG, CSTCHGQG, CPTCHGKG, and CNSCHGEG.

This sequence belongs to the DnaJ family. As to quaternary structure, homodimer. Zn(2+) serves as cofactor.

It is found in the cytoplasm. In terms of biological role, participates actively in the response to hyperosmotic and heat shock by preventing the aggregation of stress-denatured proteins and by disaggregating proteins, also in an autonomous, DnaK-independent fashion. Unfolded proteins bind initially to DnaJ; upon interaction with the DnaJ-bound protein, DnaK hydrolyzes its bound ATP, resulting in the formation of a stable complex. GrpE releases ADP from DnaK; ATP binding to DnaK triggers the release of the substrate protein, thus completing the reaction cycle. Several rounds of ATP-dependent interactions between DnaJ, DnaK and GrpE are required for fully efficient folding. Also involved, together with DnaK and GrpE, in the DNA replication of plasmids through activation of initiation proteins. The sequence is that of Chaperone protein DnaJ from Aliivibrio fischeri (strain ATCC 700601 / ES114) (Vibrio fischeri).